The primary structure comprises 177 residues: ATP-dependent protease subunit HslV (177 aa).

Threonine 2 is a catalytic residue. Residues alanine 159, aspartate 162, and threonine 165 each contribute to the Na(+) site.

The protein belongs to the peptidase T1B family. HslV subfamily. In terms of assembly, a double ring-shaped homohexamer of HslV is capped on each side by a ring-shaped HslU homohexamer. The assembly of the HslU/HslV complex is dependent on binding of ATP.

The protein localises to the cytoplasm. The enzyme catalyses ATP-dependent cleavage of peptide bonds with broad specificity.. Allosterically activated by HslU binding. In terms of biological role, protease subunit of a proteasome-like degradation complex believed to be a general protein degrading machinery. This Lactobacillus leichmannii protein is ATP-dependent protease subunit HslV.